Reading from the N-terminus, the 299-residue chain is GDNF family receptor alpha-4 (299 aa).

An N-terminal signal peptide occupies residues 1-20; the sequence is MVRCLGPALLLLLLLGSASS. The segment at 145–198 is disordered; it reads RGLSPAHRPPAAQASPPGLSGLVHPSAQRPRRLPAGPGRPLPARLRGPRGVPAG. Residues 177-198 are compositionally biased toward low complexity; sequence LPAGPGRPLPARLRGPRGVPAG. N-linked (GlcNAc...) asparagine glycosylation is present at asparagine 208. Residue glycine 278 is the site of GPI-anchor amidated glycine attachment. The propeptide at 279–299 is removed in mature form; that stretch reads RALERRSLLSILPVLALPALL.

The protein belongs to the GDNFR family. Interacts with ARTN ligand and RET: forms a 2:2:2 ternary complex composed of ARTN ligand, GFRA3 and RET receptor. Interacts with SORL1. As to expression, predominantly expressed in the adult thyroid gland. Low levels also found in fetal adrenal and thyroid glands.

Its subcellular location is the cell membrane. It is found in the secreted. Functionally, receptor for persephin (PSPN), a growth factor that exhibits neurotrophic activity on mesencephalic dopaminergic and motor neurons. Acts by binding to its coreceptor, GFRA4, leading to autophosphorylation and activation of the RET receptor. May be important in C-cell development and, in the postnatal development of the adrenal medulla. The sequence is that of GDNF family receptor alpha-4 (GFRA4) from Homo sapiens (Human).